A 419-amino-acid polypeptide reads, in one-letter code: Methylthioribose kinase (419 aa).

Residues asparagine 49 and lysine 64 each coordinate ATP. Aspartate 239 lines the substrate pocket. Residue aspartate 256–glutamate 258 participates in ATP binding. Residue arginine 365 participates in substrate binding.

This sequence belongs to the methylthioribose kinase family. As to quaternary structure, homodimer.

It catalyses the reaction 5-(methylsulfanyl)-D-ribose + ATP = 5-(methylsulfanyl)-alpha-D-ribose 1-phosphate + ADP + H(+). The enzyme catalyses 5-deoxy-D-ribose + ATP = 5-deoxy-alpha-D-ribose 1-phosphate + ADP + H(+). The protein operates within amino-acid biosynthesis; L-methionine biosynthesis via salvage pathway; S-methyl-5-thio-alpha-D-ribose 1-phosphate from S-methyl-5'-thioadenosine (hydrolase route): step 2/2. Its function is as follows. Catalyzes the phosphorylation of methylthioribose into methylthioribose-1-phosphate. Also catalyzes the phosphorylation of 5-deoxyribose to 5-deoxyribose-1-phosphate. Part of a bifunctional DHAP-shunt salvage pathway for SAM by-products. The chain is Methylthioribose kinase from Escherichia coli O45:K1 (strain S88 / ExPEC).